Reading from the N-terminus, the 197-residue chain is Recombination protein RecR (197 aa).

The C4-type zinc finger occupies 57 to 72; sequence CSVCFALTEQNPCPIC. The region spanning 79-174 is the Toprim domain; the sequence is SVICVVETSQ…RVTRLAHGIP (96 aa).

The protein belongs to the RecR family.

In terms of biological role, may play a role in DNA repair. It seems to be involved in an RecBC-independent recombinational process of DNA repair. It may act with RecF and RecO. This chain is Recombination protein RecR, found in Trichlorobacter lovleyi (strain ATCC BAA-1151 / DSM 17278 / SZ) (Geobacter lovleyi).